The following is an 89-amino-acid chain: MSVKIRLMRLGAKKKPFYRVVVSDSRVQRDGKFIEHVGFYDPMVPCGEPGFLKIDAERLSYWLGVGAQPTDRVSWFIKKGFVEVRPAGA.

It belongs to the bacterial ribosomal protein bS16 family.

This chain is Small ribosomal subunit protein bS16, found in Anaplasma marginale (strain Florida).